A 363-amino-acid polypeptide reads, in one-letter code: Phosphoserine aminotransferase (363 aa).

Arg42 is an L-glutamate binding site. Residues 76-77, Trp102, Thr156, Asp175, and Gln198 contribute to the pyridoxal 5'-phosphate site; that span reads GR. Residue Lys199 is modified to N6-(pyridoxal phosphate)lysine. 240–241 is a pyridoxal 5'-phosphate binding site; that stretch reads NT.

The protein belongs to the class-V pyridoxal-phosphate-dependent aminotransferase family. SerC subfamily. As to quaternary structure, homodimer. Pyridoxal 5'-phosphate serves as cofactor.

It localises to the cytoplasm. It catalyses the reaction O-phospho-L-serine + 2-oxoglutarate = 3-phosphooxypyruvate + L-glutamate. The enzyme catalyses 4-(phosphooxy)-L-threonine + 2-oxoglutarate = (R)-3-hydroxy-2-oxo-4-phosphooxybutanoate + L-glutamate. It participates in amino-acid biosynthesis; L-serine biosynthesis; L-serine from 3-phospho-D-glycerate: step 2/3. Its pathway is cofactor biosynthesis; pyridoxine 5'-phosphate biosynthesis; pyridoxine 5'-phosphate from D-erythrose 4-phosphate: step 3/5. Functionally, catalyzes the reversible conversion of 3-phosphohydroxypyruvate to phosphoserine and of 3-hydroxy-2-oxo-4-phosphonooxybutanoate to phosphohydroxythreonine. The polypeptide is Phosphoserine aminotransferase (Shewanella piezotolerans (strain WP3 / JCM 13877)).